The sequence spans 606 residues: Major centromere autoantigen B (606 aa).

G2 is modified (n,N,N-trimethylglycine). The region spanning 2–52 (GPKRRQLTFREKSRIIQEVEENPDLRKGEIARRFNIPPSTLSTILKNKRAI) is the HTH psq-type domain. 2 DNA-binding regions (H-T-H motif) span residues 28–48 (KGEIARRFNIPPSTLSTILKN) and 97–129 (GIILKEKALRIAEELGMDDFTASNGWLDRFRRR). The HTH CENPB-type domain maps to 65–136 (CRKTNKLSPY…RRRHGVVACS (72 aa)). A disordered region spans residues 138–184 (VTRSRARTSTPRAPAAPAGPAAVPSEGSGGSTPGWRTREEQPPSVAE). A compositionally biased stretch (low complexity) spans 144–163 (RTSTPRAPAAPAGPAAVPSE). A Phosphoserine modification is found at S165. A Glycyl lysine isopeptide (Lys-Gly) (interchain with G-Cter in SUMO2) cross-link involves residue K246. 2 disordered regions span residues 392–480 (GLNA…LEAE) and 504–549 (CPTL…VPVP). 2 positions are modified to phosphothreonine: T396 and T398. Acidic residues-rich tracts occupy residues 405 to 480 (GEEE…LEAE) and 512 to 545 (GGEDSDSDSDEEEEDEEEDEEDEEDDDDDEDGDE). The segment at 543–606 (GDEVPVPSFG…AGVRGLGHQS (64 aa)) is homodimerization.

In terms of assembly, antiparallel homodimer. Interacts with CENPT. Identified in a centromere complex containing histones H2A, H2B and H4, and at least CENPA, CENPB, CENPC, CENPT, CENPN, HJURP, SUPT16H, SSRP1 and RSF1. Post-translationally, poly-ADP-ribosylated by PARP1. N-terminally methylated by METTL11A/NTM1. Alpha-N-methylation is stimulated in response to extracellular stimuli, including increased cell density and heat shock, and seems to facilitate binding to CENP-B boxes. Chromatin-bound CENP-B is primarily trimethylated.

It localises to the nucleus. It is found in the chromosome. The protein resides in the centromere. Functionally, interacts with centromeric heterochromatin in chromosomes and binds to a specific 17 bp subset of alphoid satellite DNA, called the CENP-B box. May organize arrays of centromere satellite DNA into a higher-order structure which then directs centromere formation and kinetochore assembly in mammalian chromosomes. The polypeptide is Major centromere autoantigen B (CENPB) (Cricetulus griseus (Chinese hamster)).